A 193-amino-acid polypeptide reads, in one-letter code: Ganglioside GM2 activator (193 aa).

A signal peptide spans 1-20; that stretch reads MHRLPLLLLLGLLLAGSVAP. 4 cysteine pairs are disulfide-bonded: cysteine 39/cysteine 183, cysteine 99/cysteine 106, cysteine 112/cysteine 138, and cysteine 125/cysteine 136. A glycan (N-linked (GlcNAc...) asparagine) is linked at asparagine 151.

In terms of tissue distribution, widely expressed. Most abundant in kidney and testis.

The protein localises to the lysosome. It catalyses the reaction cholesterol(in) = cholesterol(out). Functionally, binds gangliosides and stimulates ganglioside GM2 degradation. It stimulates only the breakdown of ganglioside GM2 and glycolipid GA2 by beta-hexosaminidase A. It extracts single GM2 molecules from membranes and presents them in soluble form to beta-hexosaminidase A for cleavage of N-acetyl-D-galactosamine and conversion to GM3. The large binding pocket can accommodate several single chain phospholipids and fatty acids, GM2A also exhibits some calcium-independent phospholipase activity. Has cholesterol transfer activity. This chain is Ganglioside GM2 activator, found in Mus musculus (Mouse).